A 344-amino-acid chain; its full sequence is Mitochondrial mRNA pseudouridine synthase RPUSD3 (344 aa).

A mitochondrion-targeting transit peptide spans 1 to 41; it reads MGGWRVLGQASGGWRRGLGIRATSTAAGFGTKARHQLQRRG. The interval 29–59 is disordered; sequence FGTKARHQLQRRGASKPSDPPGDQPFPGLLR. The segment covering 32 to 42 has biased composition (basic residues); the sequence is KARHQLQRRGA. Residue S64 is modified to Phosphoserine.

This sequence belongs to the pseudouridine synthase RluA family. As to quaternary structure, forms a regulatory protein-RNA complex, consisting of RCC1L, NGRN, RPUSD3, RPUSD4, TRUB2, FASTKD2 and 16S mt-rRNA.

It localises to the mitochondrion matrix. It carries out the reaction a uridine in mRNA = a pseudouridine in mRNA. Catalyzes uridine to pseudouridine isomerization (pseudouridylation) of specific mitochondrial mRNAs (mt-mRNAs), a post-transcriptional modification necessary for their translation. Acts at position 390 in COXI mt-mRNA and at position 697-699 in mitochondrial COXIII mt-mRNA. As a component of a functional protein-RNA module, consisting of RCC1L, NGRN, RPUSD3, RPUSD4, TRUB2, FASTKD2 and 16S mitochondrial ribosomal RNA (16S mt-rRNA), controls 16S mt-rRNA abundance and may play a role in mitochondrial ribosome biogenesis. The chain is Mitochondrial mRNA pseudouridine synthase RPUSD3 (RPUSD3) from Bos taurus (Bovine).